The primary structure comprises 416 residues: Glutamyl-tRNA reductase (416 aa).

Residues 49–52, Ser105, 110–112, and Gln116 contribute to the substrate site; these read TCNR and EPQ. Cys50 (nucleophile) is an active-site residue. 185-190 lines the NADP(+) pocket; that stretch reads GAGETI.

This sequence belongs to the glutamyl-tRNA reductase family. As to quaternary structure, homodimer.

The catalysed reaction is (S)-4-amino-5-oxopentanoate + tRNA(Glu) + NADP(+) = L-glutamyl-tRNA(Glu) + NADPH + H(+). It functions in the pathway porphyrin-containing compound metabolism; protoporphyrin-IX biosynthesis; 5-aminolevulinate from L-glutamyl-tRNA(Glu): step 1/2. Its function is as follows. Catalyzes the NADPH-dependent reduction of glutamyl-tRNA(Glu) to glutamate 1-semialdehyde (GSA). In Shewanella piezotolerans (strain WP3 / JCM 13877), this protein is Glutamyl-tRNA reductase.